A 419-amino-acid polypeptide reads, in one-letter code: ADIPOR-like receptor IZH3 (419 aa).

The disordered stretch occupies residues methionine 1 to leucine 65. Residues methionine 1–threonine 147 lie on the Lumenal side of the membrane. Asparagine 145 carries an N-linked (GlcNAc...) asparagine glycan. A helical membrane pass occupies residues isoleucine 148–tryptophan 168. Topologically, residues proline 169–lysine 184 are cytoplasmic. The helical transmembrane segment at tryptophan 185–histidine 205 threads the bilayer. The Lumenal portion of the chain corresponds to threonine 206–threonine 225. N-linked (GlcNAc...) asparagine glycosylation occurs at asparagine 208. The chain crosses the membrane as a helical span at residues glycine 226–leucine 246. Residues serine 247–proline 249 are Cytoplasmic-facing. Residues leucine 250 to tryptophan 270 traverse the membrane as a helical segment. At serine 271–arginine 283 the chain is on the lumenal side. The helical transmembrane segment at isoleucine 284–glutamine 304 threads the bilayer. Over valine 305–histidine 311 the chain is Cytoplasmic. A helical membrane pass occupies residues leucine 312–alanine 332. Residues threonine 333–tryptophan 377 are Lumenal-facing. The chain crosses the membrane as a helical span at residues tryptophan 378–valine 398. Residues glycine 399–phenylalanine 419 are Cytoplasmic-facing.

It belongs to the ADIPOR family.

Its subcellular location is the endoplasmic reticulum membrane. In terms of biological role, ADIPOR-like receptor involved in zinc metabolism either by altering membrane sterol content or by directly altering cellular zinc levels. This chain is ADIPOR-like receptor IZH3 (IZH3), found in Eremothecium gossypii (strain ATCC 10895 / CBS 109.51 / FGSC 9923 / NRRL Y-1056) (Yeast).